The primary structure comprises 426 residues: Glutamyl-tRNA reductase (426 aa).

Residues 49–52 (TCNR), Ser110, 115–117 (EAQ), and Gln121 each bind substrate. The Nucleophile role is filled by Cys50. 191–196 (GAGEMA) contributes to the NADP(+) binding site.

This sequence belongs to the glutamyl-tRNA reductase family. As to quaternary structure, homodimer.

It catalyses the reaction (S)-4-amino-5-oxopentanoate + tRNA(Glu) + NADP(+) = L-glutamyl-tRNA(Glu) + NADPH + H(+). Its pathway is porphyrin-containing compound metabolism; protoporphyrin-IX biosynthesis; 5-aminolevulinate from L-glutamyl-tRNA(Glu): step 1/2. Functionally, catalyzes the NADPH-dependent reduction of glutamyl-tRNA(Glu) to glutamate 1-semialdehyde (GSA). The protein is Glutamyl-tRNA reductase of Rhodopirellula baltica (strain DSM 10527 / NCIMB 13988 / SH1).